The sequence spans 269 residues: Tryptophan synthase alpha chain (269 aa).

Active-site proton acceptor residues include glutamate 49 and aspartate 60.

It belongs to the TrpA family. Tetramer of two alpha and two beta chains.

It carries out the reaction (1S,2R)-1-C-(indol-3-yl)glycerol 3-phosphate + L-serine = D-glyceraldehyde 3-phosphate + L-tryptophan + H2O. Its pathway is amino-acid biosynthesis; L-tryptophan biosynthesis; L-tryptophan from chorismate: step 5/5. Functionally, the alpha subunit is responsible for the aldol cleavage of indoleglycerol phosphate to indole and glyceraldehyde 3-phosphate. This chain is Tryptophan synthase alpha chain, found in Azotobacter vinelandii (strain DJ / ATCC BAA-1303).